A 76-amino-acid polypeptide reads, in one-letter code: Theta defensin subunit A (76 aa).

The N-terminal stretch at 1–22 (MRTFALLTAMLLLVALHAQAEA) is a signal peptide. A propeptide spanning residues 23 to 64 (RQARADEAAAQQQPGADDQGMAHSFTWPENAALPLSESAKGL) is cleaved from the precursor. The segment at 25-45 (ARADEAAAQQQPGADDQGMAH) is disordered. Low complexity predominate over residues 30-44 (AAAQQQPGADDQGMA). Arg65 is covalently cross-linked (Cyclopeptide (Arg-Cys) (interchain with C-73 in subunit A); in form BTD-3). Arg65 is covalently cross-linked (Cyclopeptide (Arg-Cys) (interchain with C-73 in subunit B); in form BTD-1). Arg65 participates in a covalent cross-link: Cyclopeptide (Arg-Cys) (interchain with C-73 in subunit C); in form BTD-4. A Cyclopeptide (Arg-Cys) (interchain with C-73 in subunit D); in form BTD-7 cross-link involves residue Arg65. Cys68 and Cys73 are joined by a disulfide. Residue Cys73 forms a Cyclopeptide (Cys-Arg) (interchain with R-65 in subunit A); in form BTD-3 linkage. A Cyclopeptide (Cys-Arg) (interchain with R-65 in subunit B); in form BTD-1 cross-link involves residue Cys73. A Cyclopeptide (Cys-Arg) (interchain with R-65 in subunit C); in form BTD-4 cross-link involves residue Cys73. Cys73 is covalently cross-linked (Cyclopeptide (Cys-Arg) (interchain with R-65 in subunit D); in form BTD-7). A propeptide spanning residues 74 to 76 (RLL) is cleaved from the precursor.

Belongs to the alpha-defensin family. Theta subfamily. As to quaternary structure, BTD-1 is a cyclic heterodimer composed of subunits A and B; disulfide-linked. BTD-3 is a cyclic homodimer composed of two subunits A; disulfide-linked. BTD-4 is a cyclic heterodimer composed of subunits A and C; disulfide-linked. BTD-7 is a cyclic heterodimer composed of subunits A and D; disulfide-linked. In terms of processing, forms a cyclic peptide with subunit B (BTD-1), subunit A (BTD-3), subunit C (BTD-4), or subunit D (BTD-7). An additional intersubunit disulfide bond is formed.

In terms of biological role, BTD-1, BTD-3, BTD-4 and BTD-7 have antimicrobial activity against the Gram-negative bacterium E.coli ML35, the Gram-positive bacterium S.aureus 502a, and the fungus C.albicans 16820. BTD-3 is more effective against E.coli than BTD-1, BTD-4 and BTD-7. In Papio anubis (Olive baboon), this protein is Theta defensin subunit A (BTDA).